A 283-amino-acid chain; its full sequence is Nucleotide-binding protein Hore_15880 (283 aa).

Residue 8–15 (GMSGAGKS) coordinates ATP. 57–60 (DIRG) contributes to the GTP binding site.

Belongs to the RapZ-like family.

In terms of biological role, displays ATPase and GTPase activities. The protein is Nucleotide-binding protein Hore_15880 of Halothermothrix orenii (strain H 168 / OCM 544 / DSM 9562).